A 178-amino-acid polypeptide reads, in one-letter code: SCAN domain-containing protein 1 (178 aa).

The tract at residues 1 to 107 (MAATEQSLAP…GSRPGPETFR (107 aa)) is disordered. A compositionally biased stretch (low complexity) spans 9 to 18 (APAGSSAPPS). Residues 36-54 (GSSSTPEAPSIPDSSNPSA) are compositionally biased toward polar residues. The 72-residue stretch at 107 to 178 (RQRFRQFRYQ…RRRTDVRITG (72 aa)) folds into the SCAN box domain.

As to quaternary structure, interacts with ZNF202.

The protein resides in the nucleus. In terms of biological role, may regulate transcriptional activity. The sequence is that of SCAN domain-containing protein 1 (SCAND1) from Bos taurus (Bovine).